The primary structure comprises 232 residues: Large ribosomal subunit protein uL1 (232 aa).

This sequence belongs to the universal ribosomal protein uL1 family. Part of the 50S ribosomal subunit.

In terms of biological role, binds directly to 23S rRNA. The L1 stalk is quite mobile in the ribosome, and is involved in E site tRNA release. Protein L1 is also a translational repressor protein, it controls the translation of the L11 operon by binding to its mRNA. The sequence is that of Large ribosomal subunit protein uL1 from Xanthobacter autotrophicus (strain ATCC BAA-1158 / Py2).